Reading from the N-terminus, the 427-residue chain is Steroid C26-monooxygenase (427 aa).

Position 360 (Cys360) interacts with heme.

Belongs to the cytochrome P450 family. It depends on heme as a cofactor.

The catalysed reaction is cholest-4-en-3-one + 6 reduced [2Fe-2S]-[ferredoxin] + 3 O2 + 5 H(+) = (25S)-3-oxocholest-4-en-26-oate + 6 oxidized [2Fe-2S]-[ferredoxin] + 4 H2O. Its pathway is steroid metabolism; cholesterol degradation. Functionally, involved in the utilization of cholesterol as the sole carbon and energy source by degrading the side chain. Primarily catalyzes the sequential oxidation of the terminal methyl of cholest-4-en-3-one into (25S)-26-hydroxycholest-4-en-3-one (alcohol), (25S)-26-oxocholest-4-en-3-one (aldehyde), to finally yield the carboxylic acid (25S)-3-oxocholest-4-en-26-oate. Also able to sequentially oxidize cholesterol itself, not only cholest-4-en-3-one. This chain is Steroid C26-monooxygenase, found in Mycolicibacterium smegmatis (strain ATCC 700084 / mc(2)155) (Mycobacterium smegmatis).